A 107-amino-acid chain; its full sequence is Ferredoxin-1 (107 aa).

2 consecutive 4Fe-4S ferredoxin-type domains span residues 2–30 (AFVVTDNCIKCKYTDCVEVCPVDCFYEGP) and 31–60 (NFLVIHPDECIDCALCEPECPAQAIFSEDE). Residues C9 and C17 each coordinate [3Fe-4S] cluster. Residues C21, C40, C43, and C46 each coordinate [4Fe-4S] cluster. [3Fe-4S] cluster is bound at residue C50. The segment at 84–107 (EKKDPLPDAEDWDGVKGKLQHLER) is disordered. Residues 96–107 (DGVKGKLQHLER) are compositionally biased toward basic and acidic residues.

[4Fe-4S] cluster serves as cofactor. Requires [3Fe-4S] cluster as cofactor.

Its function is as follows. Ferredoxins are iron-sulfur proteins that transfer electrons in a wide variety of metabolic reactions. This ferredoxin could play a role in regulating gene expression by interacting directly with DNA. This chain is Ferredoxin-1 (fdxA), found in Azotobacter vinelandii.